Consider the following 469-residue polypeptide: Squamosa promoter-binding-like protein 3 (469 aa).

Residues 96–118 (SAEEHDKNMDKGKSKVDDTGTSR) form a disordered region. Residues 97–115 (AEEHDKNMDKGKSKVDDTG) are compositionally biased toward basic and acidic residues. Residues 179-256 (NPHCQVEGCN…HDHNARRRKP (78 aa)) form an SBP-type zinc finger. Zn(2+)-binding residues include C182, C187, C204, H207, C223, C226, H230, and C242. The Bipartite nuclear localization signal motif lies at 239 to 255 (KRSCRRRLHDHNARRRK). The tract at residues 446 to 469 (NDDDEDHLQLPKPSYDNSHYDQMN) is disordered. Residues 460–469 (YDNSHYDQMN) are compositionally biased toward polar residues.

As to expression, ubiquitous.

It is found in the nucleus. In terms of biological role, trans-acting factor that binds specifically to the consensus nucleotide sequence 5'-TNCGTACAA-3'. May be involved in panicle development. The sequence is that of Squamosa promoter-binding-like protein 3 (SPL3) from Oryza sativa subsp. indica (Rice).